The primary structure comprises 443 residues: Adenylyltransferase and sulfurtransferase UBA4 (443 aa).

ATP contacts are provided by residues Gly83, Asp104, 111–115 (SNLHR), Lys128, and 172–173 (DT). Cys214 and Cys217 together coordinate Zn(2+). The Glycyl thioester intermediate; for adenylyltransferase activity role is filled by Cys231. The Zn(2+) site is built by Cys292 and Cys295. The 99-residue stretch at 343-441 (QSKAPVLLDV…WSDIVNPKFP (99 aa)) folds into the Rhodanese domain. Cys400 (cysteine persulfide intermediate; for sulfurtransferase activity) is an active-site residue.

In the N-terminal section; belongs to the HesA/MoeB/ThiF family. UBA4 subfamily. Zn(2+) is required as a cofactor.

It is found in the cytoplasm. The protein localises to the cytosol. Its pathway is tRNA modification; 5-methoxycarbonylmethyl-2-thiouridine-tRNA biosynthesis. Functionally, plays a central role in 2-thiolation of mcm(5)S(2)U at tRNA wobble positions of cytosolic tRNA(Lys), tRNA(Glu) and tRNA(Gln). Acts by mediating the C-terminal thiocarboxylation of sulfur carrier URM1. Its N-terminus first activates URM1 as acyl-adenylate (-COAMP), then the persulfide sulfur on the catalytic cysteine is transferred to URM1 to form thiocarboxylation (-COSH) of its C-terminus. The reaction probably involves hydrogen sulfide that is generated from the persulfide intermediate and that acts as a nucleophile towards URM1. Subsequently, a transient disulfide bond is formed. Does not use thiosulfate as sulfur donor; NFS1 probably acting as a sulfur donor for thiocarboxylation reactions. Prior mcm(5) tRNA modification by the elongator complex is required for 2-thiolation. May also be involved in protein urmylation. The protein is Adenylyltransferase and sulfurtransferase UBA4 of Scheffersomyces stipitis (strain ATCC 58785 / CBS 6054 / NBRC 10063 / NRRL Y-11545) (Yeast).